A 92-amino-acid polypeptide reads, in one-letter code: Small ribosomal subunit protein bS20 (92 aa).

The tract at residues 1–23 (MANSPSAKKRAKQAEKRRSHNAS) is disordered. Residues 7 to 20 (AKKRAKQAEKRRSH) are compositionally biased toward basic residues.

Belongs to the bacterial ribosomal protein bS20 family.

Its function is as follows. Binds directly to 16S ribosomal RNA. This Pseudomonas fluorescens (strain ATCC BAA-477 / NRRL B-23932 / Pf-5) protein is Small ribosomal subunit protein bS20.